The chain runs to 264 residues: [LysW]-aminoadipate/[LysW]-glutamate kinase (264 aa).

Residues 35–36, R62, and N167 each bind substrate; that span reads GG.

The protein belongs to the acetylglutamate kinase family. LysZ subfamily.

Its subcellular location is the cytoplasm. The catalysed reaction is [amino-group carrier protein]-C-terminal-N-(1,4-dicarboxybutan-1-yl)-L-glutamine + ATP = [amino-group carrier protein]-C-terminal-N-(1-carboxy-5-phosphooxy-5-oxopentan-1-yl)-L-glutamine + ADP. It carries out the reaction [amino-group carrier protein]-C-terminal-gamma-(L-glutamyl)-L-glutamate + ATP = [amino-group carrier protein]-C-terminal-gamma-(5-phospho-L-glutamyl)-L-glutamate + ADP. It participates in amino-acid biosynthesis; L-lysine biosynthesis via AAA pathway; L-lysine from L-alpha-aminoadipate (Thermus route): step 2/5. The protein operates within amino-acid biosynthesis; L-arginine biosynthesis. In terms of biological role, involved in both the arginine and lysine biosynthetic pathways. Phosphorylates the LysW-bound precursors glutamate (for arginine biosynthesis), respectively alpha-aminoadipate (for lysine biosynthesis). This is [LysW]-aminoadipate/[LysW]-glutamate kinase from Saccharolobus islandicus (strain L.S.2.15 / Lassen #1) (Sulfolobus islandicus).